A 364-amino-acid chain; its full sequence is tRNA/tmRNA (uracil-C(5))-methyltransferase (364 aa).

The S-adenosyl-L-methionine site is built by Gln189, Tyr216, Asn221, Glu237, and Asp297. Cys322 functions as the Nucleophile in the catalytic mechanism. Glu356 serves as the catalytic Proton acceptor.

This sequence belongs to the class I-like SAM-binding methyltransferase superfamily. RNA M5U methyltransferase family. TrmA subfamily.

The enzyme catalyses uridine(54) in tRNA + S-adenosyl-L-methionine = 5-methyluridine(54) in tRNA + S-adenosyl-L-homocysteine + H(+). It carries out the reaction uridine(341) in tmRNA + S-adenosyl-L-methionine = 5-methyluridine(341) in tmRNA + S-adenosyl-L-homocysteine + H(+). Its function is as follows. Dual-specificity methyltransferase that catalyzes the formation of 5-methyluridine at position 54 (m5U54) in all tRNAs, and that of position 341 (m5U341) in tmRNA (transfer-mRNA). This chain is tRNA/tmRNA (uracil-C(5))-methyltransferase, found in Campylobacter curvus (strain 525.92).